The sequence spans 167 residues: MGRRFRGESHHKVDSKGRVSIPASFRRVLEASDPNWQPGDAPELVIVYGDHRRQYLECYTMEAIEEVDAKIAALPRGSKGRKILERIFNGQSLPTTVDETGRLVLPAKLRQKIDLDKEAFFIASGDTFQIWKPETYEEVEMAEAEKLMDELPDDFDPLEFLDGAGGA.

2 consecutive SpoVT-AbrB domains span residues 8 to 51 and 92 to 135; these read ESHH…YGDH and SLPT…KPET.

The protein belongs to the MraZ family. In terms of assembly, forms oligomers.

The protein resides in the cytoplasm. The protein localises to the nucleoid. This Ruegeria sp. (strain TM1040) (Silicibacter sp.) protein is Transcriptional regulator MraZ.